The following is a 955-amino-acid chain: Disintegrin and metalloproteinase domain-containing protein 19 (955 aa).

The first 25 residues, 1-25, serve as a signal peptide directing secretion; the sequence is MPGGAGAARLCLLAFALQPLRPRAA. Positions 26–202 are excised as a propeptide; sequence REPGWTRGSE…QTKKRPRRMK (177 aa). Positions 130–137 match the Cysteine switch motif; sequence STCRGIRG. A Zn(2+)-binding site is contributed by Cys132. The N-linked (GlcNAc...) asparagine glycan is linked to Asn144. At 203-699 the chain is on the extracellular side; that stretch reads REDLNSMKYV…IDSGPMPPES (497 aa). Positions 210-408 constitute a Peptidase M12B domain; it reads KYVELYLVAD…GGGMCLSNMP (199 aa). Cystine bridges form between Cys320-Cys403, Cys360-Cys387, and Cys361-Cys370. His345 contacts Zn(2+). Glu346 is an active-site residue. 2 residues coordinate Zn(2+): His349 and His355. The Disintegrin domain maps to 416–502; the sequence is GRRCGNGYLE…HCPTNFYQMD (87 aa). 2 N-linked (GlcNAc...) asparagine glycosylation sites follow: Asn444 and Asn447. Cysteines 474 and 494 form a disulfide. The N-linked (GlcNAc...) asparagine glycan is linked to Asn645. In terms of domain architecture, EGF-like spans 650-682; it reads ETEGCGKKCNGHGVCNNNQNCHCLPGWAPPFCN. 3 cysteine pairs are disulfide-bonded: Cys654/Cys664, Cys658/Cys670, and Cys672/Cys681. The chain crosses the membrane as a helical span at residues 700 to 720; sequence VGPVVAGVLVAILVLAVLMLM. Topologically, residues 721–955 are cytoplasmic; sequence YYCCRQNNKL…AKHSCFLVPA (235 aa). Residues 753-771 show a composition bias toward polar residues; that stretch reads SQNSGTGHANPTFKLQTPQ. The interval 753–917 is disordered; that stretch reads SQNSGTGHAN…LKVKAGTRGL (165 aa). Pro residues-rich tracts occupy residues 787 to 796 and 833 to 844; these read SQPPPRPPPD and RPPPSRPIPPAP. The SH3-binding signature appears at 833–844; sequence RPPPSRPIPPAP.

Interacts with SH3PXD2A. Zn(2+) is required as a cofactor. The precursor is cleaved by a furin endopeptidase. Expressed in many normal organ tissues and several cancer cell lines.

Its subcellular location is the membrane. In terms of biological role, participates in the proteolytic processing of beta-type neuregulin isoforms which are involved in neurogenesis and synaptogenesis, suggesting a regulatory role in glial cell. Also cleaves alpha-2 macroglobulin. May be involved in osteoblast differentiation and/or osteoblast activity in bone. This Homo sapiens (Human) protein is Disintegrin and metalloproteinase domain-containing protein 19 (ADAM19).